Reading from the N-terminus, the 117-residue chain is Large ribosomal subunit protein bL20 (117 aa).

Belongs to the bacterial ribosomal protein bL20 family.

In terms of biological role, binds directly to 23S ribosomal RNA and is necessary for the in vitro assembly process of the 50S ribosomal subunit. It is not involved in the protein synthesizing functions of that subunit. The polypeptide is Large ribosomal subunit protein bL20 (Geobacter metallireducens (strain ATCC 53774 / DSM 7210 / GS-15)).